Consider the following 366-residue polypeptide: Phospho-2-dehydro-3-deoxyheptonate aldolase (366 aa).

The protein belongs to the class-I DAHP synthase family.

The catalysed reaction is D-erythrose 4-phosphate + phosphoenolpyruvate + H2O = 7-phospho-2-dehydro-3-deoxy-D-arabino-heptonate + phosphate. It participates in metabolic intermediate biosynthesis; chorismate biosynthesis; chorismate from D-erythrose 4-phosphate and phosphoenolpyruvate: step 1/7. In terms of biological role, stereospecific condensation of phosphoenolpyruvate (PEP) and D-erythrose-4-phosphate (E4P) giving rise to 3-deoxy-D-arabino-heptulosonate-7-phosphate (DAHP). This chain is Phospho-2-dehydro-3-deoxyheptonate aldolase (aroG), found in Corynebacterium glutamicum (strain ATCC 13032 / DSM 20300 / JCM 1318 / BCRC 11384 / CCUG 27702 / LMG 3730 / NBRC 12168 / NCIMB 10025 / NRRL B-2784 / 534).